Reading from the N-terminus, the 164-residue chain is Cyanate hydratase (164 aa).

Catalysis depends on residues arginine 104, glutamate 107, and serine 130.

Belongs to the cyanase family.

The enzyme catalyses cyanate + hydrogencarbonate + 3 H(+) = NH4(+) + 2 CO2. Its function is as follows. Catalyzes the reaction of cyanate with bicarbonate to produce ammonia and carbon dioxide. This chain is Cyanate hydratase, found in Botryotinia fuckeliana (strain B05.10) (Noble rot fungus).